The sequence spans 342 residues: tRNA N6-adenosine threonylcarbamoyltransferase (342 aa).

The Fe cation site is built by histidine 115 and histidine 119. Residues 137 to 141 (IVSGG), aspartate 170, glycine 183, aspartate 187, and asparagine 276 each bind substrate. A Fe cation-binding site is contributed by aspartate 304.

Belongs to the KAE1 / TsaD family. The cofactor is Fe(2+).

It localises to the cytoplasm. It catalyses the reaction L-threonylcarbamoyladenylate + adenosine(37) in tRNA = N(6)-L-threonylcarbamoyladenosine(37) in tRNA + AMP + H(+). Its function is as follows. Required for the formation of a threonylcarbamoyl group on adenosine at position 37 (t(6)A37) in tRNAs that read codons beginning with adenine. Is involved in the transfer of the threonylcarbamoyl moiety of threonylcarbamoyl-AMP (TC-AMP) to the N6 group of A37, together with TsaE and TsaB. TsaD likely plays a direct catalytic role in this reaction. The chain is tRNA N6-adenosine threonylcarbamoyltransferase from Staphylococcus saprophyticus subsp. saprophyticus (strain ATCC 15305 / DSM 20229 / NCIMB 8711 / NCTC 7292 / S-41).